A 327-amino-acid chain; its full sequence is Tetraacyldisaccharide 4'-kinase (327 aa).

52 to 59 serves as a coordination point for ATP; sequence TLGGAGKT.

Belongs to the LpxK family.

It catalyses the reaction a lipid A disaccharide + ATP = a lipid IVA + ADP + H(+). The protein operates within glycolipid biosynthesis; lipid IV(A) biosynthesis; lipid IV(A) from (3R)-3-hydroxytetradecanoyl-[acyl-carrier-protein] and UDP-N-acetyl-alpha-D-glucosamine: step 6/6. In terms of biological role, transfers the gamma-phosphate of ATP to the 4'-position of a tetraacyldisaccharide 1-phosphate intermediate (termed DS-1-P) to form tetraacyldisaccharide 1,4'-bis-phosphate (lipid IVA). This chain is Tetraacyldisaccharide 4'-kinase, found in Methylorubrum populi (strain ATCC BAA-705 / NCIMB 13946 / BJ001) (Methylobacterium populi).